The following is a 175-amino-acid chain: Crossover junction endodeoxyribonuclease RuvC (175 aa).

Active-site residues include aspartate 16, glutamate 76, and aspartate 148. Mg(2+) is bound by residues aspartate 16, glutamate 76, and aspartate 148.

It belongs to the RuvC family. Homodimer which binds Holliday junction (HJ) DNA. The HJ becomes 2-fold symmetrical on binding to RuvC with unstacked arms; it has a different conformation from HJ DNA in complex with RuvA. In the full resolvosome a probable DNA-RuvA(4)-RuvB(12)-RuvC(2) complex forms which resolves the HJ. The cofactor is Mg(2+).

It is found in the cytoplasm. The catalysed reaction is Endonucleolytic cleavage at a junction such as a reciprocal single-stranded crossover between two homologous DNA duplexes (Holliday junction).. The RuvA-RuvB-RuvC complex processes Holliday junction (HJ) DNA during genetic recombination and DNA repair. Endonuclease that resolves HJ intermediates. Cleaves cruciform DNA by making single-stranded nicks across the HJ at symmetrical positions within the homologous arms, yielding a 5'-phosphate and a 3'-hydroxyl group; requires a central core of homology in the junction. The consensus cleavage sequence is 5'-(A/T)TT(C/G)-3'. Cleavage occurs on the 3'-side of the TT dinucleotide at the point of strand exchange. HJ branch migration catalyzed by RuvA-RuvB allows RuvC to scan DNA until it finds its consensus sequence, where it cleaves and resolves the cruciform DNA. The sequence is that of Crossover junction endodeoxyribonuclease RuvC from Bradyrhizobium diazoefficiens (strain JCM 10833 / BCRC 13528 / IAM 13628 / NBRC 14792 / USDA 110).